The sequence spans 396 residues: RNA polymerase principal sigma factor HrdA (396 aa).

Residues 1 to 20 are compositionally biased toward basic residues; the sequence is MRGGQRRASRLRPPTYRRRP. Residues 1 to 96 form a disordered region; sequence MRGGQRRASR…PTRTESGGPS (96 aa). Composition is skewed to low complexity over residues 33–42 and 56–75; these read QTQTLTQTDT and LLAM…PGAP. The short motif at 187 to 200 is the Polymerase core binding element; that stretch reads DLVQEGNLGLIRAV. A DNA-binding region (H-T-H motif) is located at residues 357–376; the sequence is LEEIGRLFGVTRERIRQIES.

The protein belongs to the sigma-70 factor family. As to quaternary structure, interacts transiently with the RNA polymerase catalytic core. Interacts with RNA polymerase-binding protein RbpA.

Its function is as follows. Sigma factors are initiation factors that promote the attachment of RNA polymerase to specific initiation sites and are then released. The chain is RNA polymerase principal sigma factor HrdA (hrdA) from Streptomyces coelicolor (strain ATCC BAA-471 / A3(2) / M145).